The primary structure comprises 891 residues: 26S proteasome non-ATPase regulatory subunit 2 homolog A (891 aa).

The segment at Met-1 to Leu-44 is disordered. The Nuclear localization signal motif lies at Ala-14–Leu-21. Residues Ala-14–Glu-37 show a composition bias toward basic and acidic residues. Lys-218 participates in a covalent cross-link: Glycyl lysine isopeptide (Lys-Gly) (interchain with G-Cter in ubiquitin). Thr-219 carries the O-acetylthreonine modification. 7 PC repeats span residues Ser-414–Ala-447, Gly-448–Ile-484, Gly-485–Val-519, Phe-522–Gly-556, Leu-565–Lys-594, Leu-674–Met-705, and Ala-724–Ser-739.

Belongs to the proteasome subunit S2 family. In terms of assembly, component of the 19S regulatory particle (RP/PA700) base subcomplex of the 26S proteasome. The 26S proteasome is composed of a core protease (CP), known as the 20S proteasome, capped at one or both ends by the 19S regulatory particle (RP/PA700). The RP/PA700 complex is composed of at least 17 different subunits in two subcomplexes, the base and the lid, which form the portions proximal and distal to the 20S proteolytic core, respectively. Interacts with JMJ27. Expressed in stems, leaves, buds, flowers, siliques and developing seeds.

It is found in the nucleus. Its subcellular location is the cytoplasm. Functionally, acts as a regulatory subunit of the 26 proteasome which is involved in the ATP-dependent degradation of ubiquitinated proteins. Required during embryogenesis. Required for optimal plant growth and stress responses. Required for innate immunity. Prevents JMJ27 accumulation in non-drought conditions. This Arabidopsis thaliana (Mouse-ear cress) protein is 26S proteasome non-ATPase regulatory subunit 2 homolog A.